A 146-amino-acid chain; its full sequence is Ferredoxin-thioredoxin reductase catalytic chain, chloroplastic (146 aa).

Residues 1–26 constitute a chloroplast transit peptide; it reads MMSMASTTASPFCPSPMPRGRKCTVR. C85 contacts [4Fe-4S] cluster. C87 functions as the Nucleophile in the catalytic mechanism. An intrachain disulfide couples C87 to C117. Residues C104, C106, and C115 each coordinate [4Fe-4S] cluster.

This sequence belongs to the ferredoxin thioredoxin reductase beta subunit family. In terms of assembly, heterodimer of subunit A (variable subunit) and subunit B (catalytic subunit). Heterodimeric FTR forms a complex with ferredoxin and thioredoxin. Requires [4Fe-4S] cluster as cofactor.

Its subcellular location is the plastid. The protein resides in the chloroplast. It carries out the reaction [thioredoxin]-disulfide + 2 reduced [2Fe-2S]-[ferredoxin] + 2 H(+) = [thioredoxin]-dithiol + 2 oxidized [2Fe-2S]-[ferredoxin]. In terms of biological role, catalytic subunit of the ferredoxin-thioredoxin reductase (FTR), which catalyzes the two-electron reduction of thioredoxins by the electrons provided by reduced ferredoxin. The protein is Ferredoxin-thioredoxin reductase catalytic chain, chloroplastic of Oryza sativa subsp. japonica (Rice).